A 255-amino-acid chain; its full sequence is Ribosomal RNA large subunit methyltransferase E (255 aa).

The S-adenosyl-L-methionine site is built by Gly50, Trp52, Asp68, Asp84, and Asp108. Lys148 acts as the Proton acceptor in catalysis. In terms of domain architecture, TRAM spans Pro195–Glu253.

This sequence belongs to the class I-like SAM-binding methyltransferase superfamily. RNA methyltransferase RlmE family.

It localises to the cytoplasm. It carries out the reaction uridine(2552) in 23S rRNA + S-adenosyl-L-methionine = 2'-O-methyluridine(2552) in 23S rRNA + S-adenosyl-L-homocysteine + H(+). Functionally, specifically methylates the uridine in position 2552 of 23S rRNA at the 2'-O position of the ribose in the fully assembled 50S ribosomal subunit. This Methanothrix thermoacetophila (strain DSM 6194 / JCM 14653 / NBRC 101360 / PT) (Methanosaeta thermophila) protein is Ribosomal RNA large subunit methyltransferase E.